The sequence spans 301 residues: tRNA uridine(34) hydroxylase (301 aa).

Positions 120–214 constitute a Rhodanese domain; the sequence is SAPDVAVIDT…YLEDVPEDQS (95 aa). The Cysteine persulfide intermediate role is filled by cysteine 174.

This sequence belongs to the TrhO family.

It catalyses the reaction uridine(34) in tRNA + AH2 + O2 = 5-hydroxyuridine(34) in tRNA + A + H2O. Catalyzes oxygen-dependent 5-hydroxyuridine (ho5U) modification at position 34 in tRNAs. The protein is tRNA uridine(34) hydroxylase of Jannaschia sp. (strain CCS1).